The sequence spans 283 residues: Pantothenate synthetase (283 aa).

M31 to H38 serves as a coordination point for ATP. The Proton donor role is filled by H38. Position 62 (Q62) interacts with (R)-pantoate. Beta-alanine is bound at residue Q62. Position 148-151 (G148–D151) interacts with ATP. Q154 is a binding site for (R)-pantoate. Residues V177 and K185–R188 each bind ATP.

Belongs to the pantothenate synthetase family. In terms of assembly, homodimer.

It localises to the cytoplasm. It catalyses the reaction (R)-pantoate + beta-alanine + ATP = (R)-pantothenate + AMP + diphosphate + H(+). Its pathway is cofactor biosynthesis; (R)-pantothenate biosynthesis; (R)-pantothenate from (R)-pantoate and beta-alanine: step 1/1. Its function is as follows. Catalyzes the condensation of pantoate with beta-alanine in an ATP-dependent reaction via a pantoyl-adenylate intermediate. This Staphylococcus aureus (strain MSSA476) protein is Pantothenate synthetase.